The sequence spans 510 residues: Cytochrome P450 4A6 (510 aa).

Positions 1 to 4 are excised as a propeptide; it reads MSVS. Residues E321 and C457 each coordinate heme.

This sequence belongs to the cytochrome P450 family. Heme is required as a cofactor. In terms of tissue distribution, liver; kidney.

The protein resides in the endoplasmic reticulum membrane. It is found in the microsome membrane. It carries out the reaction an omega-methyl-long-chain fatty acid + reduced [NADPH--hemoprotein reductase] + O2 = an omega-hydroxy-long-chain fatty acid + oxidized [NADPH--hemoprotein reductase] + H2O + H(+). Its function is as follows. Cytochromes P450 are a group of heme-thiolate monooxygenases. In liver microsomes, this enzyme is involved in an NADPH-dependent electron transport pathway. It oxidizes a variety of structurally unrelated compounds, including steroids, fatty acids, and xenobiotics. Functionally, the kidney P-450 system is rather specialized for the omega-hydroxylation of fatty acids. Both P450-KA1 and P450-KA2 catalyze the omega- and (omega-1)-hydroxylation of various fatty acids with no drug-metabolizing activity, and hydroxylate prostaglandin A1 and A2 solely at the omega-position. The protein is Cytochrome P450 4A6 (CYP4A6) of Oryctolagus cuniculus (Rabbit).